The following is a 168-amino-acid chain: RNA pyrophosphohydrolase (168 aa).

The region spanning 8-160 (PYRPCVGLAI…KRQVYERVAR (153 aa)) is the Nudix hydrolase domain. A Nudix box motif is present at residues 47–68 (GGIDKGEEPYEAALRELYEETS).

Belongs to the Nudix hydrolase family. RppH subfamily. Requires a divalent metal cation as cofactor.

In terms of biological role, accelerates the degradation of transcripts by removing pyrophosphate from the 5'-end of triphosphorylated RNA, leading to a more labile monophosphorylated state that can stimulate subsequent ribonuclease cleavage. The polypeptide is RNA pyrophosphohydrolase (Azorhizobium caulinodans (strain ATCC 43989 / DSM 5975 / JCM 20966 / LMG 6465 / NBRC 14845 / NCIMB 13405 / ORS 571)).